A 3948-amino-acid polypeptide reads, in one-letter code: Hybrid PKS-NRPS synthetase ucsA (3948 aa).

Residues 11–440 (NEPIAVIGSG…GTNAHAILER (430 aa)) form the Ketosynthase family 3 (KS3) domain. Catalysis depends on for beta-ketoacyl synthase activity residues cysteine 184, histidine 323, and histidine 363. The malonyl-CoA:ACP transacylase (MAT) domain stretch occupies residues 548–881 (IFTGQGAQWP…FSTAIGQLWA (334 aa)). Residues 940–1079 (HPLLGTLGAD…GHIRLTITDF (140 aa)) form an N-terminal hotdog fold region. Positions 940–1254 (HPLLGTLGAD…IRLIPFAAAS (315 aa)) are dehydratase (DH) domain. One can recognise a PKS/mFAS DH domain in the interval 940-1256 (HPLLGTLGAD…LIPFAAASEA (317 aa)). The active-site Proton acceptor; for dehydratase activity is histidine 972. A C-terminal hotdog fold region spans residues 1098–1256 (MTEVDQNLFY…LIPFAAASEA (159 aa)). Aspartate 1161 serves as the catalytic Proton donor; for dehydratase activity. Residues 1299–1460 (LAHVVGQITH…LRAGFTGVET (162 aa)) are methyltransferase (MT) domain. A ketoreductase (KR) domain region spans residues 1989–2165 (TYILFGLAGA…ASVIDIGPIS (177 aa)). Residues 2275-2357 (DVARVLRHAI…GLVDFAVDNL (83 aa)) form the Carrier 1 domain. Serine 2317 is modified (O-(pantetheine 4'-phosphoryl)serine). Over residues 2381–2404 (PKAKTDAPAAAPTPASATAPGSKS) the composition is skewed to low complexity. The interval 2381 to 2473 (PKAKTDAPAA…SSQAASLESS (93 aa)) is disordered. Polar residues-rich tracts occupy residues 2405–2418 (DGNV…ADQS) and 2426–2437 (PQPTAILTNATA). The span at 2441-2456 (PVSPSLSVTGSTSSAA) shows a compositional bias: low complexity. Residues 2462–2473 (PTSSQAASLESS) are compositionally biased toward polar residues. Residues 2489–2926 (EKTLPMSYGQ…PQIFNSSKVQ (438 aa)) form a condensation (C) domain region. The segment at 2950–3355 (DIAAVQPTLT…GEFVLQARIK (406 aa)) is adenylation (A) (KR) domain. Residues 3483–3507 (PLTNKGGLKETPVARPTRYQNDPIP) are disordered. The 80-residue stretch at 3513-3592 (SSPFSSLDQV…QMASLLDGKD (80 aa)) folds into the Carrier 2 domain. An O-(pantetheine 4'-phosphoryl)serine modification is found at serine 3552. A reductase (R) domain region spans residues 3633–3852 (LTGATGFLGL…QFVPVEDVAN (220 aa)).

It in the C-terminal section; belongs to the NRP synthetase family.

Its pathway is mycotoxin biosynthesis. Hybrid PKS-NRPS synthetase; part of the gene cluster that mediates the biosynthesis of UCS1025A, a member of the pyrrolizidinone family that acts as a strong telomerase inhibitor and displays potent antibacterial and antitumor properties. These compounds share a hemiaminal-containing pyrrolizidinone core fused with a gamma-lactone, giving a furopyrrolizidine that is connected to a decalin fragment. The polyketide synthase module (PKS) of the PKS-NRPS ucsA is responsible for the synthesis of the polyketide backbone via the condensation of an acetyl-CoA starter unit with 6 malonyl-CoA units. The downstream nonribosomal peptide synthetase (NRPS) module then amidates the carboxyl end of the polyketide with a 2S,3S-methylproline derived from L-isoleucine by the 2-oxoglutarate-dependent dioxygenase ucsF which converts L-isoleucine to (4S,5S)-4-methylpyrroline-5-carboxylate that is further converted to 2S,3S-methylproline by the pyrroline-5-carboxylate reductase ucsG. Reductive release of the completed aminoacyl polyketide from the assembly line can form the 3-pyrrolin-2-one structure via an intramolecular Knoevenagel reaction. Because ucsA lacks a designated enoylreductase (ER) domain, the required activity is provided the enoyl reductase ucsL. This keto acyclic precursor is the substrate of the Diels-Alderase ucsH, that catalyzes the Diels-Alder cycloaddition. Oxidation of the 3S-methyl group to a carboxylate by the cytochrome P450 monooxygenase ucsK allows an oxa-Michael cyclization that might involve the reductase/dehydrogenase ucsI and which furnishes the furopyrrolizidine. The oxidase ucsJ likely plays a critical role in stereoselective reduction of the C5-C6 double bond to afford the required R-configured carboxylate group. Further enolization and oxidation at C5 by an unidentified enzyme affords the last intermediate that can undergo oxa-Michael cyclization to yield UCS1025A. The polypeptide is Hybrid PKS-NRPS synthetase ucsA (Acremonium sp).